A 294-amino-acid chain; its full sequence is Diaminopimelate epimerase (294 aa).

Residues asparagine 15, glutamine 47, and asparagine 67 each coordinate substrate. The active-site Proton donor is the cysteine 76. Substrate contacts are provided by residues 77–78, asparagine 163, asparagine 197, and 215–216; these read GN and ER. Cysteine 224 (proton acceptor) is an active-site residue. 225-226 lines the substrate pocket; sequence GS.

Belongs to the diaminopimelate epimerase family. As to quaternary structure, homodimer.

The protein localises to the cytoplasm. The catalysed reaction is (2S,6S)-2,6-diaminopimelate = meso-2,6-diaminopimelate. The protein operates within amino-acid biosynthesis; L-lysine biosynthesis via DAP pathway; DL-2,6-diaminopimelate from LL-2,6-diaminopimelate: step 1/1. Its function is as follows. Catalyzes the stereoinversion of LL-2,6-diaminopimelate (L,L-DAP) to meso-diaminopimelate (meso-DAP), a precursor of L-lysine and an essential component of the bacterial peptidoglycan. The polypeptide is Diaminopimelate epimerase (Mesorhizobium japonicum (strain LMG 29417 / CECT 9101 / MAFF 303099) (Mesorhizobium loti (strain MAFF 303099))).